Consider the following 689-residue polypeptide: Methionine--tRNA ligase (689 aa).

The short motif at 15 to 25 is the 'HIGH' region element; the sequence is PYANGPIHLGH. Zn(2+) contacts are provided by C146, C149, C159, and C162. A 'KMSKS' region motif is present at residues 332–336; the sequence is KMSKS. K335 contributes to the ATP binding site. Residues 588–689 form the tRNA-binding domain; the sequence is DFAKIDLRIA…EGAQPGMRVK (102 aa).

Belongs to the class-I aminoacyl-tRNA synthetase family. MetG type 1 subfamily. As to quaternary structure, homodimer. Zn(2+) is required as a cofactor.

It localises to the cytoplasm. The catalysed reaction is tRNA(Met) + L-methionine + ATP = L-methionyl-tRNA(Met) + AMP + diphosphate. In terms of biological role, is required not only for elongation of protein synthesis but also for the initiation of all mRNA translation through initiator tRNA(fMet) aminoacylation. In Shewanella sp. (strain W3-18-1), this protein is Methionine--tRNA ligase.